A 253-amino-acid chain; its full sequence is UPF0758 protein Bxeno_A3578 (253 aa).

In terms of domain architecture, MPN spans 131–253; it reads LINSPEAVEN…VYSFARAGWP (123 aa). Zn(2+) is bound by residues His202, His204, and Asp215. The JAMM motif signature appears at 202–215; sequence HNHPSGAVQPSASD.

The protein belongs to the UPF0758 family.

The sequence is that of UPF0758 protein Bxeno_A3578 from Paraburkholderia xenovorans (strain LB400).